Consider the following 302-residue polypeptide: Enoyl-CoA delta isomerase 1, mitochondrial (302 aa).

Residues Met1–Arg41 constitute a mitochondrion transit peptide. At Lys61 the chain carries N6-acetyllysine; alternate. Position 61 is an N6-succinyllysine; alternate (Lys61). Lys84 carries the post-translational modification N6-succinyllysine. At Lys89 the chain carries N6-acetyllysine. Residues Ala106–Leu110, Gly153, and Asn177 contribute to the substrate site. Residue Lys283 is modified to N6-acetyllysine; alternate. Lys283 bears the N6-succinyllysine; alternate mark. The residue at position 288 (Lys288) is an N6-succinyllysine.

Belongs to the enoyl-CoA hydratase/isomerase family. Homotrimer. Expressed in liver (at protein level).

The protein resides in the mitochondrion matrix. The enzyme catalyses a (3Z)-enoyl-CoA = a 4-saturated (2E)-enoyl-CoA. It catalyses the reaction a (3E)-enoyl-CoA = a 4-saturated (2E)-enoyl-CoA. It carries out the reaction (3Z)-octenoyl-CoA = (2E)-octenoyl-CoA. The catalysed reaction is (2E)-tetradecenoyl-CoA = (3Z)-tetradecenoyl-CoA. The enzyme catalyses (3Z)-dodecenoyl-CoA = (2E)-dodecenoyl-CoA. It catalyses the reaction (3Z)-hexenoyl-CoA = (2E)-hexenoyl-CoA. It carries out the reaction (3Z)-decenoyl-CoA = (2E)-decenoyl-CoA. Its pathway is lipid metabolism; fatty acid beta-oxidation. Its function is as follows. Key enzyme of fatty acid beta-oxidation. Able to isomerize both 3-cis (3Z) and 3-trans (3E) double bonds into the 2-trans (2E) form in a range of enoyl-CoA species, with a preference for (3Z)-enoyl-CoAs over (3E)-enoyl-CoAs. The catalytic efficiency of this enzyme is not affected by the fatty acyl chain length. In Homo sapiens (Human), this protein is Enoyl-CoA delta isomerase 1, mitochondrial (ECI1).